The following is a 1180-amino-acid chain: MFTLSLLSRGHGKLGQDKQKLEVYFEPEDYLNWRSPEDYVPVSKPQDKNNASQHSWSLFLPKTFSTRKGALILYSEGFAISAWTPKERRKGPYCPRGPWRKLDLELHTLQDLKEAILAYGRQQGEQDRAWQPYLHFRSQLESQAQRQIQPGHSAKRYLRGLLRTWPPDAMYRLWCAGYIKDSVLLQDSQLNVPKKLRPQQDLSGVPPKYHLLPVFPSFWIQQGKSFEQRQQGLDEGEAGAAGHVDQGPLAKNHGSQGTRLPPRRKQPWQEDETQAEDTSIENHLCLYASKESYNEKTQQTSRKAFGHGRIDHSWLPSDKSHITFCGGAFPNRKADLSDKQRNVKLHKARSSHLLQVLPAERSLFPPVASATGSRIITPGEVKKKKAPKALKLPPISEEPPRVLEPLKSQFKANEPPTELFILPVEIHYHTKQPPKEKAHRRGAPHPESEPESSEESTPVWRPPLKHASLETPWELTVHLPVDASRDTLSPQGSSSLPPASLGNLTLKGSKARHTRVHSQGKGVWKGDDDAPPHDVAPPLDLLPPIKGKKSPESQKGVDSPRTSDHNSPPSLPNMRVPRRALPAAQEDSSDPTLGHFLLGPDGEKVCLSLPGHTQTEALPSGKAYESVNSNISHEEEGPSSQHFLKANTEPRANLHMNLYETSPLTQTTEKQGAQQSLEAAAQKTGEPQSCINKALICSNRKEFYTRKLHIDMTPFLKESGNALDYQEEAGRPLRETHHNDQDPEPRSMTLDSPRASRTEHIQTPEADIVQKVGRDYDVHHLHRGLLGYGPESPERLSAVYTSLLPREREGKAEPRLFSQETSANISHERDLINEAKRKEKPKKDKTKGPKSEREGKVYGQAEAAIGKSKDSKAKKKLEKKTRPQRKRTQKERNLEIAAELSGPDVSYEETEDTSNRGSFASDSFVEDPWLSPKYDAQESQVSLDGRSSPSQIATVTGNMESKEERRCEDPSKALLTKREQEKASWDRLRAERAEMRWLEVEKKRREQEEQRQLQQEQLERAKKMEEELELEQQRRTEEIRLRKQRLQEEQQRQEEEERKQQLRLKAAQERARQQQEEFRRKLRELQRKKQQEEAERAEAEKQRQEELEMQLEEEQKHLMEMAEEERLEYQRRKQEAEEKARLEAEERRQKEEEAARLALEEATKQAQEQARYWIFGQQLP.

Disordered stretches follow at residues 229-280 (RQQG…DTSI), 431-465 (KQPP…PPLK), 484-575 (SRDT…PNMR), 730-758 (GRPL…ASRT), 810-986 (GKAE…ASWD), 1045-1109 (RLQE…ELEM), and 1125-1152 (ERLE…QKEE). Residues 269-279 (QEDETQAEDTS) are compositionally biased toward acidic residues. The segment covering 431 to 443 (KQPPKEKAHRRGA) has biased composition (basic residues). A compositionally biased stretch (polar residues) spans 486-497 (DTLSPQGSSSLP). Residues 509–518 (SKARHTRVHS) show a composition bias toward basic residues. Composition is skewed to basic and acidic residues over residues 730-745 (GRPL…DPEP), 826-837 (SHERDLINEAKR), and 846-856 (TKGPKSEREGK). A compositionally biased stretch (basic residues) spans 872–889 (KAKKKLEKKTRPQRKRTQ). The segment covering 937–959 (QESQVSLDGRSSPSQIATVTGNM) has biased composition (polar residues). Composition is skewed to basic and acidic residues over residues 960-986 (ESKE…ASWD), 1045-1106 (RLQE…RQEE), and 1127-1152 (LEYQ…QKEE). Positions 988–1171 (LRAERAEMRW…ATKQAQEQAR (184 aa)) form a coiled coil.

This is an uncharacterized protein from Homo sapiens (Human).